Here is a 93-residue protein sequence, read N- to C-terminus: Sec-independent protein translocase protein TatA (93 aa).

Residues 1 to 21 (MGAMSPWHWAIVALVVVILFG) traverse the membrane as a helical segment. The interval 44 to 93 (KEMQNDNSTPAPTAQQSAPAELPVADTTTAPVTPPAPVQPQPQHTEPKSA) is disordered. Positions 51-74 (STPAPTAQQSAPAELPVADTTTAP) are enriched in low complexity.

It belongs to the TatA/E family. In terms of assembly, the Tat system comprises two distinct complexes: a TatABC complex, containing multiple copies of TatA, TatB and TatC subunits, and a separate TatA complex, containing only TatA subunits. Substrates initially bind to the TatABC complex, which probably triggers association of the separate TatA complex to form the active translocon.

The protein resides in the cell membrane. In terms of biological role, part of the twin-arginine translocation (Tat) system that transports large folded proteins containing a characteristic twin-arginine motif in their signal peptide across membranes. TatA could form the protein-conducting channel of the Tat system. The chain is Sec-independent protein translocase protein TatA from Rhodococcus opacus (strain B4).